Consider the following 446-residue polypeptide: Na(+)-translocating NADH-quinone reductase subunit A (446 aa).

Belongs to the NqrA family. Composed of six subunits; NqrA, NqrB, NqrC, NqrD, NqrE and NqrF.

It catalyses the reaction a ubiquinone + n Na(+)(in) + NADH + H(+) = a ubiquinol + n Na(+)(out) + NAD(+). NQR complex catalyzes the reduction of ubiquinone-1 to ubiquinol by two successive reactions, coupled with the transport of Na(+) ions from the cytoplasm to the periplasm. NqrA to NqrE are probably involved in the second step, the conversion of ubisemiquinone to ubiquinol. In Aliivibrio salmonicida (strain LFI1238) (Vibrio salmonicida (strain LFI1238)), this protein is Na(+)-translocating NADH-quinone reductase subunit A.